Reading from the N-terminus, the 805-residue chain is Leucine--tRNA ligase (805 aa).

The short motif at 40–51 (PYPSGSGLHVGH) is the 'HIGH' region element. The short motif at 576–580 (KMSKS) is the 'KMSKS' region element. Lysine 579 contacts ATP.

This sequence belongs to the class-I aminoacyl-tRNA synthetase family.

The protein localises to the cytoplasm. The catalysed reaction is tRNA(Leu) + L-leucine + ATP = L-leucyl-tRNA(Leu) + AMP + diphosphate. This is Leucine--tRNA ligase from Chloroherpeton thalassium (strain ATCC 35110 / GB-78).